We begin with the raw amino-acid sequence, 360 residues long: Peptide chain release factor 1 (360 aa).

N5-methylglutamine is present on Gln235. A disordered region spans residues 284–313 (AKRQQAEASTRRNLLGSGDRSDRNRTYNFP).

It belongs to the prokaryotic/mitochondrial release factor family. In terms of processing, methylated by PrmC. Methylation increases the termination efficiency of RF1.

It localises to the cytoplasm. Peptide chain release factor 1 directs the termination of translation in response to the peptide chain termination codons UAG and UAA. The chain is Peptide chain release factor 1 from Salmonella arizonae (strain ATCC BAA-731 / CDC346-86 / RSK2980).